The following is a 172-amino-acid chain: MSSLEISSSCFNLETKLPLSPPLVEDSAFEPSRKDMDEVEEKSKDVINFTAEKLSVDEVSQLVISPLCGAISLFVGTTRNNFEGKKVISLEYEAYLPMAENEVRKICSDIRQKWPVKHIAVFHRLGHRAASLEAVSYAIDTLKAKVPIWKKEIYEESSSWKGNKECFWASNN.

Ser20 carries the phosphoserine modification. Residues 127–128, Lys143, and 150–152 each bind substrate; these read HR and KKE.

Belongs to the MoaE family. MOCS2B subfamily. Heterotetramer; composed of 2 small (MOCS2A) and 2 large (MOCS2B) subunits.

It localises to the cytoplasm. The protein localises to the cytosol. The catalysed reaction is 2 [molybdopterin-synthase sulfur-carrier protein]-C-terminal-Gly-aminoethanethioate + cyclic pyranopterin phosphate + H2O = molybdopterin + 2 [molybdopterin-synthase sulfur-carrier protein]-C-terminal Gly-Gly + 2 H(+). It participates in cofactor biosynthesis; molybdopterin biosynthesis. Its function is as follows. Catalytic subunit of the molybdopterin synthase complex, a complex that catalyzes the conversion of precursor Z into molybdopterin. Acts by mediating the incorporation of 2 sulfur atoms from thiocarboxylated MOCS2A into precursor Z to generate a dithiolene group. The polypeptide is Molybdopterin synthase catalytic subunit (Pongo abelii (Sumatran orangutan)).